Here is a 60-residue protein sequence, read N- to C-terminus: Large ribosomal subunit protein bL32 (60 aa).

The protein belongs to the bacterial ribosomal protein bL32 family.

The sequence is that of Large ribosomal subunit protein bL32 from Kosmotoga olearia (strain ATCC BAA-1733 / DSM 21960 / TBF 19.5.1).